The following is a 342-amino-acid chain: 6-hydroxytryprostatin B O-methyltransferase (342 aa).

Asp201 is a binding site for S-adenosyl-L-methionine. His244 (proton acceptor) is an active-site residue.

It belongs to the class I-like SAM-binding methyltransferase superfamily. Cation-independent O-methyltransferase family. Homodimer.

It catalyses the reaction 6-hydroxytryprostatin B + S-adenosyl-L-methionine = tryprostatin A + S-adenosyl-L-homocysteine + H(+). It participates in alkaloid biosynthesis. 6-hydroxytryprostatin B O-methyltransferase; part of the gene cluster that mediates the biosynthesis of fumitremorgins, indole alkaloids that carry not only intriguing chemical structures, but also interesting biological and pharmacological activities. The biosynthesis of fumitremorgin-type alkaloids begins by condensation of the two amino acids L-tryptophan and L-proline to brevianamide F, catalyzed by the non-ribosomal peptide synthetase ftmA. Brevianamide F is then prenylated by the prenyltransferase ftmPT1/ftmB in the presence of dimethylallyl diphosphate, resulting in the formation of tryprostatin B. The three cytochrome P450 monooxygenases, ftmP450-1/ftmC, ftmP450-2/ftmE and ftmP450-3/FtmG, are responsible for the conversion of tryprostatin B to 6-hydroxytryprostatin B, tryprostatin A to fumitremorgin C and fumitremorgin C to 12,13-dihydroxyfumitremorgin C, respectively. The putative methyltransferase ftmMT/ftmD is expected for the conversion of 6-hydroxytryprostatin B to tryprostatin A. FtmPT2/FtmH catalyzes the prenylation of 12,13-dihydroxyfumitre-morgin C in the presence of dimethylallyl diphosphate, resulting in the formation of fumitremorgin B. Fumitremorgin B is further converted to verruculogen by ftmOx1/ftmF via the insertion of an endoperoxide bond between the two prenyl moieties. In some fungal species, verruculogen is further converted to fumitremorgin A, but the enzymes involved in this step have not been identified yet. The polypeptide is 6-hydroxytryprostatin B O-methyltransferase (Aspergillus fumigatus (Neosartorya fumigata)).